We begin with the raw amino-acid sequence, 503 residues long: UDP-N-acetylmuramoylalanine--D-glutamate ligase (503 aa).

Position 129-135 (glycine 129–threonine 135) interacts with ATP.

The protein belongs to the MurCDEF family.

Its subcellular location is the cytoplasm. The enzyme catalyses UDP-N-acetyl-alpha-D-muramoyl-L-alanine + D-glutamate + ATP = UDP-N-acetyl-alpha-D-muramoyl-L-alanyl-D-glutamate + ADP + phosphate + H(+). The protein operates within cell wall biogenesis; peptidoglycan biosynthesis. Functionally, cell wall formation. Catalyzes the addition of glutamate to the nucleotide precursor UDP-N-acetylmuramoyl-L-alanine (UMA). The polypeptide is UDP-N-acetylmuramoylalanine--D-glutamate ligase (Burkholderia multivorans (strain ATCC 17616 / 249)).